The primary structure comprises 215 residues: ER lumen protein-retaining receptor 3 (215 aa).

Topologically, residues 1 to 4 (MNIF) are lumenal. Residues 5–24 (RLSGDVCHLIAIIILFLKIW) form a helical membrane-spanning segment. At 25–32 (RSKSCAGI) the chain is on the cytoplasmic side. The chain crosses the membrane as a helical span at residues 33-52 (SGKSQVLFALVFTTRYLDLF). The interval 47-48 (RY) is interaction with the K-D-E-L motif on target proteins. The Lumenal portion of the chain corresponds to 53 to 58 (TSYISA). A helical membrane pass occupies residues 59–79 (YNTVMKVVYLLLAYSTVGLIF). Topologically, residues 80-92 (FRFRNSYDSESDS) are cytoplasmic. A helical membrane pass occupies residues 93-110 (FRVEFLLVPVAGLSFLEN). Topologically, residues 111 to 116 (YAFTPL) are lumenal. The chain crosses the membrane as a helical span at residues 117 to 135 (EILWTFSIYLESVAILPQL). Residues 136 to 149 (FMITKTGEAESITA) lie on the Cytoplasmic side of the membrane. A helical membrane pass occupies residues 150-168 (HYLLFLGLYRALYLANWLW). Residues 159–169 (RALYLANWLWR) are interaction with the K-D-E-L motif on target proteins. Topologically, residues 169–178 (RFHTEGFYDQ) are lumenal. A helical membrane pass occupies residues 179-199 (IAVVSGVVQTIFYCDFFYLYF). At 200-215 (TRVLRGSGKMSLPMPV) the chain is on the cytoplasmic side. Residues 204-208 (RGSGK) form an important for recycling of cargo proteins with the sequence motif K-D-E-L from the Golgi to the endoplasmic reticulum region.

It belongs to the ERD2 family.

The protein localises to the endoplasmic reticulum membrane. It localises to the golgi apparatus membrane. Its subcellular location is the cytoplasmic vesicle. It is found in the COPI-coated vesicle membrane. In terms of biological role, receptor for the C-terminal sequence motif K-D-E-L that is present on endoplasmic reticulum resident proteins and that mediates their recycling from the Golgi back to the endoplasmic reticulum. In Danio rerio (Zebrafish), this protein is ER lumen protein-retaining receptor 3 (kdelr3).